The following is a 100-amino-acid chain: Co-chaperonin GroES (100 aa).

The protein belongs to the GroES chaperonin family. In terms of assembly, heptamer of 7 subunits arranged in a ring. Interacts with the chaperonin GroEL.

It localises to the cytoplasm. Functionally, together with the chaperonin GroEL, plays an essential role in assisting protein folding. The GroEL-GroES system forms a nano-cage that allows encapsulation of the non-native substrate proteins and provides a physical environment optimized to promote and accelerate protein folding. GroES binds to the apical surface of the GroEL ring, thereby capping the opening of the GroEL channel. This chain is Co-chaperonin GroES, found in Mycolicibacterium vanbaalenii (strain DSM 7251 / JCM 13017 / BCRC 16820 / KCTC 9966 / NRRL B-24157 / PYR-1) (Mycobacterium vanbaalenii).